The sequence spans 583 residues: Long-chain-fatty-acid--AMP ligase FadD26 (583 aa).

The protein belongs to the ATP-dependent AMP-binding enzyme family.

The enzyme catalyses holo-[(phenol)carboxyphthiodiolenone synthase] + a long-chain fatty acid + ATP = a long-chain fatty acyl-[(phenol)carboxyphthiodiolenone synthase] + AMP + diphosphate. The catalysed reaction is eicosanoate + holo-[(phenol)carboxyphthiodiolenone synthase] + ATP = icosanoyl-[(phenol)carboxyphthiodiolenone synthase] + AMP + diphosphate. It catalyses the reaction holo-[(phenol)carboxyphthiodiolenone synthase] + docosanoate + ATP = docosanoyl-[(phenol)carboxyphthiodiolenone synthase] + AMP + diphosphate. It participates in lipid metabolism; fatty acid biosynthesis. Catalyzes the activation of long-chain fatty acids as acyl-adenylates (acyl-AMP), which are then transferred to the multifunctional polyketide synthase PpsA for further chain extension. Catalyzes the adenylation of the long-chain fatty acids eicosanoate (C20) or docosanoate (C22), and potentially the very-long-chain fatty acid lignocerate (C24). Involved in the biosynthesis of phthiocerol dimycocerosate (DIM A) and phthiodiolone dimycocerosate (DIM B). This is Long-chain-fatty-acid--AMP ligase FadD26 (fadD26) from Mycobacterium bovis (strain ATCC BAA-935 / AF2122/97).